The primary structure comprises 229 residues: Uracil-DNA glycosylase (229 aa).

Aspartate 64 acts as the Proton acceptor in catalysis.

Belongs to the uracil-DNA glycosylase (UDG) superfamily. UNG family.

Its subcellular location is the cytoplasm. It catalyses the reaction Hydrolyzes single-stranded DNA or mismatched double-stranded DNA and polynucleotides, releasing free uracil.. Excises uracil residues from the DNA which can arise as a result of misincorporation of dUMP residues by DNA polymerase or due to deamination of cytosine. The sequence is that of Uracil-DNA glycosylase from Salmonella choleraesuis (strain SC-B67).